The following is a 1156-amino-acid chain: Pre-mRNA-processing ATP-dependent RNA helicase PRP5 (1156 aa).

Composition is skewed to basic and acidic residues over residues 1 to 12 and 71 to 92; these read MSGYDNRDDYRH and GHDRRHDRDRNRERDRRDHDSP. Disordered regions lie at residues 1–177, 216–337, and 351–390; these read MSGY…STGI, IASA…DEEE, and VAQVNDDDRRKASASGGHERTQAKSKAVVLGRDDSDGEAE. Polar residues predominate over residues 137–147; it reads PTRSSLNTQLP. The span at 152–165 shows a compositional bias: pro residues; that stretch reads VAPPGMAPGPPPSL. Low complexity-rich tracts occupy residues 166–175 and 222–242; these read PSSTPIVPST and PSSQRTESFSSSSTPQTAPTS. Over residues 252–267 the composition is skewed to polar residues; that stretch reads SLRTDPSRTTAQNRSR. The segment covering 356–372 has biased composition (basic and acidic residues); it reads DDDRRKASASGGHERTQ. The short motif at 476–504 is the Q motif element; it reads TKWSHCGLPASCLDVIKRLGYSAPTPIQS. A Helicase ATP-binding domain is found at 507–685; the sequence is MPAIMSGRDI…RKVLKNKPLE (179 aa). ATP is bound at residue 520-527; the sequence is AKTGSGKT. The DEAD box signature appears at 633-636; the sequence is DEAD. A Helicase C-terminal domain is found at 697–861; sequence EIEQIVEVRS…HVPPELEAMA (165 aa). Disordered stretches follow at residues 900 to 937 and 1028 to 1049; these read KSAYGEADDDAKAAAAGDSSEDKAKTGAPPGASSSEDQ and ARKEAAKNSELDKHKDRKARDP.

This sequence belongs to the DEAD box helicase family. DDX46/PRP5 subfamily.

It localises to the nucleus. The enzyme catalyses ATP + H2O = ADP + phosphate + H(+). ATP-dependent RNA helicase involved spliceosome assembly and in nuclear splicing. Catalyzes an ATP-dependent conformational change of U2 snRNP. Bridges U1 and U2 snRNPs and enables stable U2 snRNP association with intron RNA. In Mycosarcoma maydis (Corn smut fungus), this protein is Pre-mRNA-processing ATP-dependent RNA helicase PRP5 (PRP5).